We begin with the raw amino-acid sequence, 250 residues long: Triosephosphate isomerase (250 aa).

N9–K11 lines the substrate pocket. The Electrophile role is filled by H94. The active-site Proton acceptor is E165. Residues G171, S211, and G232 to G233 contribute to the substrate site.

This sequence belongs to the triosephosphate isomerase family. Homodimer.

The protein localises to the cytoplasm. It catalyses the reaction D-glyceraldehyde 3-phosphate = dihydroxyacetone phosphate. It functions in the pathway carbohydrate biosynthesis; gluconeogenesis. It participates in carbohydrate degradation; glycolysis; D-glyceraldehyde 3-phosphate from glycerone phosphate: step 1/1. In terms of biological role, involved in the gluconeogenesis. Catalyzes stereospecifically the conversion of dihydroxyacetone phosphate (DHAP) to D-glyceraldehyde-3-phosphate (G3P). This Alkalilimnicola ehrlichii (strain ATCC BAA-1101 / DSM 17681 / MLHE-1) protein is Triosephosphate isomerase.